We begin with the raw amino-acid sequence, 94 residues long: Small ubiquitin-related modifier 3 (94 aa).

Residue Lys11 forms a Glycyl lysine isopeptide (Lys-Gly) (interchain with G-Cter in SUMO) linkage. A Ubiquitin-like domain is found at 15–92 (DHINLKVAGQ…IDVFQQQTGG (78 aa)). Gly92 is covalently cross-linked (Glycyl lysine isopeptide (Gly-Lys) (interchain with K-? in acceptor proteins)). Residues 93–94 (LC) constitute a propeptide that is removed on maturation.

It belongs to the ubiquitin family. SUMO subfamily. In terms of assembly, interacts with SAE2 and UBE2I. Covalently attached to a number of proteins. Polymeric chains can be formed through Lys-11 cross-linking. In terms of processing, cleavage of precursor form by a sentrin-specific protease is necessary for function.

The protein localises to the cytoplasm. It is found in the nucleus. The protein resides in the PML body. Ubiquitin-like protein which can be covalently attached to target lysines either as a monomer or as a lysine-linked polymer. Does not seem to be involved in protein degradation and may function as an antagonist of ubiquitin in the degradation process. Plays a role in a number of cellular processes such as nuclear transport, DNA replication and repair, mitosis and signal transduction. Covalent attachment to its substrates requires prior activation by the E1 complex SAE1-SAE2 and linkage to the E2 enzyme UBE2I. The sequence is that of Small ubiquitin-related modifier 3 from Gallus gallus (Chicken).